The sequence spans 306 residues: GTPase Era (306 aa).

An Era-type G domain is found at Tyr13–Glu181. Residues Gly21–Ser28 are G1. GTP is bound at residue Gly21–Ser28. The tract at residues Gln47–His51 is G2. Residues Asp68–Gly71 are G3. GTP contacts are provided by residues Asp68 to Leu72 and Asn130 to Asp133. The interval Asn130–Asp133 is G4. The interval Ile160–Ala162 is G5. The region spanning Thr212 to Ser289 is the KH type-2 domain.

Belongs to the TRAFAC class TrmE-Era-EngA-EngB-Septin-like GTPase superfamily. Era GTPase family. As to quaternary structure, monomer.

The protein resides in the cytoplasm. It is found in the cell inner membrane. Its function is as follows. An essential GTPase that binds both GDP and GTP, with rapid nucleotide exchange. Plays a role in 16S rRNA processing and 30S ribosomal subunit biogenesis and possibly also in cell cycle regulation and energy metabolism. This chain is GTPase Era, found in Pasteurella multocida (strain Pm70).